A 445-amino-acid chain; its full sequence is GTPase Der (445 aa).

EngA-type G domains are found at residues 3–167 and 180–353; these read PVIA…YAGE and IKIA…AAAM. GTP is bound by residues 9–16, 56–60, 119–122, 186–193, 233–237, and 298–301; these read GRPNVGKS, DTGGF, NKAE, DTAGL, and NKWD. The KH-like domain maps to 354–438; the sequence is KKLPTPKLTR…PLRIEFRSST (85 aa).

It belongs to the TRAFAC class TrmE-Era-EngA-EngB-Septin-like GTPase superfamily. EngA (Der) GTPase family. As to quaternary structure, associates with the 50S ribosomal subunit.

Its function is as follows. GTPase that plays an essential role in the late steps of ribosome biogenesis. This chain is GTPase Der, found in Burkholderia pseudomallei (strain 1106a).